The sequence spans 356 residues: Poly(rC)-binding protein 1 (356 aa).

At M1 the chain carries N-acetylmethionine. KH domains follow at residues 13–75 (TLTI…FAMI) and 97–162 (PVTL…VKQI). Residue K115 forms a Glycyl lysine isopeptide (Lys-Gly) (interchain with G-Cter in SUMO2) linkage. 6 positions are modified to phosphoserine: S173, S189, S190, S246, S264, and S273. The region spanning 279–343 (QTTHELTIPN…ASISLAQYLI (65 aa)) is the KH 3 domain.

In terms of processing, phosphorylated; lowers poly(rC)-binding activity.

It localises to the nucleus. The protein localises to the cytoplasm. Single-stranded nucleic acid binding protein that binds preferentially to oligo dC. Together with PCBP2, required for erythropoiesis, possibly by regulating mRNA splicing. This chain is Poly(rC)-binding protein 1 (PCBP1), found in Bos taurus (Bovine).